A 240-amino-acid chain; its full sequence is Small ribosomal subunit protein uS2c (240 aa).

The protein belongs to the universal ribosomal protein uS2 family.

The protein resides in the plastid. The protein localises to the chloroplast. The protein is Small ribosomal subunit protein uS2c (rps2) of Cycas taitungensis (Prince sago).